Consider the following 346-residue polypeptide: Uroporphyrinogen decarboxylase (346 aa).

Residues 26 to 30, aspartate 76, tyrosine 153, serine 208, and histidine 323 each bind substrate; that span reads RQAGR.

It belongs to the uroporphyrinogen decarboxylase family. Homodimer.

Its subcellular location is the cytoplasm. The enzyme catalyses uroporphyrinogen III + 4 H(+) = coproporphyrinogen III + 4 CO2. It participates in porphyrin-containing compound metabolism; protoporphyrin-IX biosynthesis; coproporphyrinogen-III from 5-aminolevulinate: step 4/4. In terms of biological role, catalyzes the decarboxylation of four acetate groups of uroporphyrinogen-III to yield coproporphyrinogen-III. The sequence is that of Uroporphyrinogen decarboxylase from Prochlorococcus marinus (strain AS9601).